A 137-amino-acid polypeptide reads, in one-letter code: Interferon-induced transmembrane protein 3 (137 aa).

Over Met-1 to His-57 the chain is Cytoplasmic. A Phosphotyrosine modification is found at Tyr-20. Lys-24 is covalently cross-linked (Glycyl lysine isopeptide (Lys-Gly) (interchain with G-Cter in ubiquitin)). Tyr-27 is modified (phosphotyrosine). Residues Val-58–Tyr-78 constitute an intramembrane region (helical). An interaction with SPP1 region spans residues Trp-60–Val-93. S-palmitoyl cysteine attachment occurs at residues Cys-71 and Cys-72. Residues Ala-79–Ser-109 lie on the Cytoplasmic side of the membrane. Glycyl lysine isopeptide (Lys-Gly) (interchain with G-Cter in ubiquitin) cross-links involve residues Lys-83, Lys-88, and Lys-104. Cys-105 carries S-palmitoyl cysteine lipidation. The interval Ile-108–Gln-133 is interaction with VAPA. A helical transmembrane segment spans residues Thr-110–Leu-130. Over Asn-131–Thr-137 the chain is Extracellular.

The protein belongs to the CD225/Dispanin family. As to quaternary structure, interacts with ATP6V0B. Interacts with CD81. Interacts with SPP1; the interaction reduces OPN expression. Interacts with BRI3. In terms of processing, polyubiquitinated with both 'Lys-48' and 'Lys-63' linkages. Ubiquitination negatively regulates antiviral activity. Lys-24 is the most prevalent ubiquitination site. Post-translationally, phosphorylation at Tyr-20 is required for endosomal and lysosomal location. As to expression, expressed in acinar cell. Predominantly expressed in nascent primordial germ cells, as well as in gonadal germ cells.

The protein resides in the cell membrane. Its subcellular location is the late endosome membrane. The protein localises to the early endosome membrane. It localises to the lysosome membrane. It is found in the cytoplasm. The protein resides in the perinuclear region. In terms of biological role, IFN-induced antiviral protein which disrupts intracellular cholesterol homeostasis. Inhibits the entry of viruses to the host cell cytoplasm by preventing viral fusion with cholesterol depleted endosomes. May inactivate new enveloped viruses which buds out of the infected cell, by letting them go out with a cholesterol depleted membrane. Active against multiple viruses, including influenza A virus, SARS coronaviruses (SARS-CoV and SARS-CoV-2), Marburg virus (MARV), Ebola virus (EBOV), Dengue virus (DNV), West Nile virus (WNV), human immunodeficiency virus type 1 (HIV-1), hepatitis C virus (HCV) and vesicular stomatitis virus (VSV). Can inhibit: influenza virus hemagglutinin protein-mediated viral entry, MARV and EBOV GP1,2-mediated viral entry, SARS-CoV and SARS-CoV-2 S protein-mediated viral entry and VSV G protein-mediated viral entry. Plays a critical role in the structural stability and function of vacuolar ATPase (v-ATPase). Establishes physical contact with the v-ATPase of endosomes which is critical for proper clathrin localization and is also required for the function of the v-ATPase to lower the pH in phagocytic endosomes thus establishing an antiviral state. In hepatocytes, IFITM proteins act in a coordinated manner to restrict HCV infection by targeting the endocytosed HCV virion for lysosomal degradation. IFITM2 and IFITM3 display anti-HCV activity that may complement the anti-HCV activity of IFITM1 by inhibiting the late stages of HCV entry, possibly in a coordinated manner by trapping the virion in the endosomal pathway and targeting it for degradation at the lysosome. Exerts opposing activities on SARS-CoV-2, including amphipathicity-dependent restriction of virus at endosomes and amphipathicity-independent enhancement of infection at the plasma membrane. This is Interferon-induced transmembrane protein 3 from Mus musculus (Mouse).